The following is a 316-amino-acid chain: Phosphate acetyltransferase (316 aa).

Belongs to the phosphate acetyltransferase and butyryltransferase family.

The protein resides in the cytoplasm. It carries out the reaction acetyl-CoA + phosphate = acetyl phosphate + CoA. The protein operates within metabolic intermediate biosynthesis; acetyl-CoA biosynthesis; acetyl-CoA from acetate: step 2/2. The protein is Phosphate acetyltransferase (pta) of Rhizobium meliloti (Ensifer meliloti).